Reading from the N-terminus, the 332-residue chain is Holliday junction branch migration complex subunit RuvB (332 aa).

The large ATPase domain (RuvB-L) stretch occupies residues 1 to 181 (MTRFLDSDAM…FGITGHMEYY (181 aa)). Residues leucine 20, arginine 21, glycine 62, lysine 65, threonine 66, threonine 67, 128 to 130 (EDF), arginine 171, tyrosine 181, and arginine 218 contribute to the ATP site. Threonine 66 is a binding site for Mg(2+). Positions 182–252 (EENDLTEIIE…ITDKALTMLD (71 aa)) are small ATPAse domain (RuvB-S). The head domain (RuvB-H) stretch occupies residues 255-332 (HEGLDYVDQK…EHLGYQRFDK (78 aa)). DNA contacts are provided by arginine 291, arginine 310, arginine 312, and arginine 315.

The protein belongs to the RuvB family. Homohexamer. Forms an RuvA(8)-RuvB(12)-Holliday junction (HJ) complex. HJ DNA is sandwiched between 2 RuvA tetramers; dsDNA enters through RuvA and exits via RuvB. An RuvB hexamer assembles on each DNA strand where it exits the tetramer. Each RuvB hexamer is contacted by two RuvA subunits (via domain III) on 2 adjacent RuvB subunits; this complex drives branch migration. In the full resolvosome a probable DNA-RuvA(4)-RuvB(12)-RuvC(2) complex forms which resolves the HJ.

It is found in the cytoplasm. The enzyme catalyses ATP + H2O = ADP + phosphate + H(+). Functionally, the RuvA-RuvB-RuvC complex processes Holliday junction (HJ) DNA during genetic recombination and DNA repair, while the RuvA-RuvB complex plays an important role in the rescue of blocked DNA replication forks via replication fork reversal (RFR). RuvA specifically binds to HJ cruciform DNA, conferring on it an open structure. The RuvB hexamer acts as an ATP-dependent pump, pulling dsDNA into and through the RuvAB complex. RuvB forms 2 homohexamers on either side of HJ DNA bound by 1 or 2 RuvA tetramers; 4 subunits per hexamer contact DNA at a time. Coordinated motions by a converter formed by DNA-disengaged RuvB subunits stimulates ATP hydrolysis and nucleotide exchange. Immobilization of the converter enables RuvB to convert the ATP-contained energy into a lever motion, pulling 2 nucleotides of DNA out of the RuvA tetramer per ATP hydrolyzed, thus driving DNA branch migration. The RuvB motors rotate together with the DNA substrate, which together with the progressing nucleotide cycle form the mechanistic basis for DNA recombination by continuous HJ branch migration. Branch migration allows RuvC to scan DNA until it finds its consensus sequence, where it cleaves and resolves cruciform DNA. In Streptococcus agalactiae serotype V (strain ATCC BAA-611 / 2603 V/R), this protein is Holliday junction branch migration complex subunit RuvB.